Reading from the N-terminus, the 374-residue chain is Trehalose-phosphate phosphatase B (374 aa).

This sequence belongs to the trehalose phosphatase family. The cofactor is a divalent metal cation. In terms of tissue distribution, expressed in flowers.

It carries out the reaction alpha,alpha-trehalose 6-phosphate + H2O = alpha,alpha-trehalose + phosphate. It participates in glycan biosynthesis; trehalose biosynthesis. Removes the phosphate from trehalose 6-phosphate to produce free trehalose. Trehalose accumulation in plant may improve abiotic stress tolerance. The protein is Trehalose-phosphate phosphatase B (TPPB) of Arabidopsis thaliana (Mouse-ear cress).